The following is an 806-amino-acid chain: Glycerol-3-phosphate acyltransferase (806 aa).

The HXXXXD motif motif lies at 305–310; the sequence is CHRSHM.

This sequence belongs to the GPAT/DAPAT family.

It localises to the cell inner membrane. The catalysed reaction is sn-glycerol 3-phosphate + an acyl-CoA = a 1-acyl-sn-glycero-3-phosphate + CoA. It participates in phospholipid metabolism; CDP-diacylglycerol biosynthesis; CDP-diacylglycerol from sn-glycerol 3-phosphate: step 1/3. This is Glycerol-3-phosphate acyltransferase from Salmonella paratyphi B (strain ATCC BAA-1250 / SPB7).